We begin with the raw amino-acid sequence, 333 residues long: Protein RecA (333 aa).

69–76 lines the ATP pocket; it reads GPESSGKT.

Belongs to the RecA family.

It is found in the cytoplasm. Can catalyze the hydrolysis of ATP in the presence of single-stranded DNA, the ATP-dependent uptake of single-stranded DNA by duplex DNA, and the ATP-dependent hybridization of homologous single-stranded DNAs. It interacts with LexA causing its activation and leading to its autocatalytic cleavage. This is Protein RecA from Mesoplasma florum (strain ATCC 33453 / NBRC 100688 / NCTC 11704 / L1) (Acholeplasma florum).